A 274-amino-acid chain; its full sequence is Diaminopimelate epimerase (274 aa).

Residues asparagine 11, glutamine 44, and asparagine 64 each coordinate substrate. Cysteine 73 (proton donor) is an active-site residue. Substrate is bound by residues 74 to 75 (GN), asparagine 157, asparagine 190, and 208 to 209 (ER). Residue cysteine 217 is the Proton acceptor of the active site. Residue 218 to 219 (GS) coordinates substrate.

This sequence belongs to the diaminopimelate epimerase family. In terms of assembly, homodimer.

The protein resides in the cytoplasm. It carries out the reaction (2S,6S)-2,6-diaminopimelate = meso-2,6-diaminopimelate. It participates in amino-acid biosynthesis; L-lysine biosynthesis via DAP pathway; DL-2,6-diaminopimelate from LL-2,6-diaminopimelate: step 1/1. In terms of biological role, catalyzes the stereoinversion of LL-2,6-diaminopimelate (L,L-DAP) to meso-diaminopimelate (meso-DAP), a precursor of L-lysine and an essential component of the bacterial peptidoglycan. This Escherichia coli O127:H6 (strain E2348/69 / EPEC) protein is Diaminopimelate epimerase.